The primary structure comprises 126 residues: Ribosome-binding factor A (126 aa).

It belongs to the RbfA family. Monomer. Binds 30S ribosomal subunits, but not 50S ribosomal subunits or 70S ribosomes.

The protein resides in the cytoplasm. Its function is as follows. One of several proteins that assist in the late maturation steps of the functional core of the 30S ribosomal subunit. Associates with free 30S ribosomal subunits (but not with 30S subunits that are part of 70S ribosomes or polysomes). Required for efficient processing of 16S rRNA. May interact with the 5'-terminal helix region of 16S rRNA. This Treponema pallidum (strain Nichols) protein is Ribosome-binding factor A.